Here is a 460-residue protein sequence, read N- to C-terminus: Probable lipid II flippase MurJ (460 aa).

11 helical membrane passes run 4 to 24 (ILGA…PNLF), 50 to 70 (FASL…LLVA), 95 to 115 (IVAI…LGAL), 122 to 142 (FFAS…ALLI), 155 to 175 (LSYG…YPLV), 228 to 248 (IASF…VSYL), 257 to 277 (LPLA…IAIA), 292 to 312 (KAWF…IMLS), 336 to 356 (VFSL…FSLW), 366 to 386 (AAKI…SLMP), and 428 to 448 (LVIL…KSWV).

Belongs to the MurJ/MviN family.

It is found in the cell inner membrane. It participates in cell wall biogenesis; peptidoglycan biosynthesis. Its function is as follows. Involved in peptidoglycan biosynthesis. Transports lipid-linked peptidoglycan precursors from the inner to the outer leaflet of the cytoplasmic membrane. This Helicobacter pylori (strain J99 / ATCC 700824) (Campylobacter pylori J99) protein is Probable lipid II flippase MurJ.